The sequence spans 247 residues: MARFKLTLEYDGSNYAGWQRQAELRTVQGAVEQAIFHFSGQQLTITTAGRTDAGVHATGQVAHVDFEKDWHVNTIHNALNAHLRQQGDNIAILNVENIPDSFDARLSAVKRHYLFKILNRRAPPALNAKRVWWLPRPLNADAMHKAAQKLVGKHDFTTFRSAHCQAKSPIRTLECLDVQREGEEIFLYARARSFLHHQIRSFAGSLMEVGIGRWTAQDLEEALHAKDRARCGMVAPPSGLYLTQVDY.

The active-site Nucleophile is aspartate 52. Residue tyrosine 113 coordinates substrate.

The protein belongs to the tRNA pseudouridine synthase TruA family. As to quaternary structure, homodimer.

The catalysed reaction is uridine(38/39/40) in tRNA = pseudouridine(38/39/40) in tRNA. Functionally, formation of pseudouridine at positions 38, 39 and 40 in the anticodon stem and loop of transfer RNAs. This is tRNA pseudouridine synthase A from Bartonella bacilliformis (strain ATCC 35685 / KC583 / Herrer 020/F12,63).